The primary structure comprises 137 residues: Small ribosomal subunit protein uS11 (137 aa).

2 disordered regions span residues 1 to 31 (MPPKSRGTGPKKTQKARRRDKKNVPHGAAHI) and 117 to 137 (TISDVTPQPHNGCRPPKRRRV). Residues 12–21 (KTQKARRRDK) show a composition bias toward basic residues.

The protein belongs to the universal ribosomal protein uS11 family. In terms of assembly, part of the 30S ribosomal subunit. Interacts with proteins S7 and S18. Binds to IF-3.

Functionally, located on the platform of the 30S subunit, it bridges several disparate RNA helices of the 16S rRNA. Forms part of the Shine-Dalgarno cleft in the 70S ribosome. The sequence is that of Small ribosomal subunit protein uS11 from Rhodococcus jostii (strain RHA1).